Consider the following 194-residue polypeptide: Large ribosomal subunit protein bL17 (194 aa).

The interval 126-194 (AEPKQTKART…SPEQTNKQEE (69 aa)) is disordered. Positions 131-140 (TKARTRRGKG) are enriched in basic residues. Composition is skewed to polar residues over residues 144-161 (ATTT…QDMA) and 181-194 (LDTQ…KQEE).

The protein belongs to the bacterial ribosomal protein bL17 family. Part of the 50S ribosomal subunit. Contacts protein L32.

This is Large ribosomal subunit protein bL17 from Amoebophilus asiaticus (strain 5a2).